The sequence spans 71 residues: Small ribosomal subunit protein bS21 (71 aa).

Residues Y38–Y71 are disordered. Positions K46–K59 are enriched in basic residues. Positions L60–Y71 are enriched in basic and acidic residues.

This sequence belongs to the bacterial ribosomal protein bS21 family.

This is Small ribosomal subunit protein bS21 from Hamiltonella defensa subsp. Acyrthosiphon pisum (strain 5AT).